A 78-amino-acid polypeptide reads, in one-letter code: ATP synthase subunit c (78 aa).

Transmembrane regions (helical) follow at residues 9–29 (AFIG…GQGW) and 56–76 (AAVT…LVFV).

It belongs to the ATPase C chain family. As to quaternary structure, F-type ATPases have 2 components, F(1) - the catalytic core - and F(0) - the membrane proton channel. F(1) has five subunits: alpha(3), beta(3), gamma(1), delta(1), epsilon(1). F(0) has three main subunits: a(1), b(2) and c(10-14). The alpha and beta chains form an alternating ring which encloses part of the gamma chain. F(1) is attached to F(0) by a central stalk formed by the gamma and epsilon chains, while a peripheral stalk is formed by the delta and b chains.

It is found in the cell membrane. F(1)F(0) ATP synthase produces ATP from ADP in the presence of a proton or sodium gradient. F-type ATPases consist of two structural domains, F(1) containing the extramembraneous catalytic core and F(0) containing the membrane proton channel, linked together by a central stalk and a peripheral stalk. During catalysis, ATP synthesis in the catalytic domain of F(1) is coupled via a rotary mechanism of the central stalk subunits to proton translocation. In terms of biological role, key component of the F(0) channel; it plays a direct role in translocation across the membrane. A homomeric c-ring of between 10-14 subunits forms the central stalk rotor element with the F(1) delta and epsilon subunits. This chain is ATP synthase subunit c, found in Malacoplasma penetrans (strain HF-2) (Mycoplasma penetrans).